A 137-amino-acid chain; its full sequence is MFSELRILRDILLLCFLSVGINAKSSHIEDLDFTDHTNGSPKISRSSYFKQDFRLGYKLKLFCESSGNPRPQIVWYHRGVEVNPDHNRTIRFSIHGDTVSSHLEVDPTSIGDKGEYECVATNLKGSRVKKFLTDYQY.

Positions 1–23 are cleaved as a signal peptide; it reads MFSELRILRDILLLCFLSVGINA. The Ig-like C2-type domain occupies 41–133; the sequence is PKISRSSYFK…KGSRVKKFLT (93 aa). A disulfide bond links Cys-63 and Cys-118.

Expressed in DD and VD GABAergic motor neurons. Expressed in a subset of head neurons including M2 motor neurons in the pharynx. Expressed in coelomocytes.

Its subcellular location is the membrane. The protein resides in the secreted. It is found in the extracellular space. The protein localises to the cell projection. It localises to the dendrite. Its subcellular location is the axon. Functionally, plays a role in neural development, where it temporally regulates synapse formation in the D-type inhibitory GABAergic motor neurons, dorsal D (DD) and ventral D (VD) motor neurons. Controls the translocation of postsynaptic proteins, such as the acetylcholine receptor subunit acr-12, and presynaptic proteins, such as snb-1, along nerve cords to prevent premature synapse remodeling/formation. The sequence is that of Immunoglobulin domain-containing protein oig-1 from Caenorhabditis elegans.